The primary structure comprises 396 residues: NADH-quinone oxidoreductase subunit D 1 (396 aa).

This sequence belongs to the complex I 49 kDa subunit family. NDH-1 is composed of 14 different subunits. Subunits NuoB, C, D, E, F, and G constitute the peripheral sector of the complex.

The protein localises to the cell inner membrane. The catalysed reaction is a quinone + NADH + 5 H(+)(in) = a quinol + NAD(+) + 4 H(+)(out). Functionally, NDH-1 shuttles electrons from NADH, via FMN and iron-sulfur (Fe-S) centers, to quinones in the respiratory chain. The immediate electron acceptor for the enzyme in this species is believed to be ubiquinone. Couples the redox reaction to proton translocation (for every two electrons transferred, four hydrogen ions are translocated across the cytoplasmic membrane), and thus conserves the redox energy in a proton gradient. The polypeptide is NADH-quinone oxidoreductase subunit D 1 (Nitrobacter hamburgensis (strain DSM 10229 / NCIMB 13809 / X14)).